A 247-amino-acid polypeptide reads, in one-letter code: 5'-nucleotidase SurE (247 aa).

A divalent metal cation-binding residues include D8, D9, S39, and N91.

It belongs to the SurE nucleotidase family. The cofactor is a divalent metal cation.

The protein resides in the cytoplasm. The enzyme catalyses a ribonucleoside 5'-phosphate + H2O = a ribonucleoside + phosphate. Its function is as follows. Nucleotidase that shows phosphatase activity on nucleoside 5'-monophosphates. The sequence is that of 5'-nucleotidase SurE from Azoarcus sp. (strain BH72).